Reading from the N-terminus, the 306-residue chain is Mitochondrial uncoupling protein 1 (306 aa).

Solcar repeat units lie at residues 9–102, 112–203, and 212–296; these read LSLP…VKNL, VPLS…VKET, and DNVV…AKKY. The next 6 helical transmembrane spans lie at 15–35, 71–91, 118–138, 177–197, 218–238, and 269–289; these read FACS…LDTA, LRSL…FGGL, ILAG…TDLV, TGLG…LASY, ILSG…VDVV, and YKGF…MFLT.

Belongs to the mitochondrial carrier (TC 2.A.29) family. As to expression, widely expressed.

Its subcellular location is the mitochondrion inner membrane. In terms of biological role, PUMPS are mitochondrial transporter proteins that create proton leaks across the inner mitochondrial membrane, thus uncoupling oxidative phosphorylation. This leads to a decrease in the efficiency of oxidative phosphorylation and an increase in heat production. Is involved in protecting plant cells against oxidative stress damage and maintaining the redox balance of the mitochondrial electron transport chain to facilitate photosynthetic metabolism. May play a regulatory role during photorespiration. The polypeptide is Mitochondrial uncoupling protein 1 (PUMP1) (Arabidopsis thaliana (Mouse-ear cress)).